Here is a 142-residue protein sequence, read N- to C-terminus: Galactose-6-phosphate isomerase subunit LacA (142 aa).

Belongs to the LacAB/RpiB family. As to quaternary structure, heteromultimeric protein consisting of LacA and LacB.

It carries out the reaction aldehydo-D-galactose 6-phosphate = keto-D-tagatose 6-phosphate. It functions in the pathway carbohydrate metabolism; D-galactose 6-phosphate degradation; D-tagatose 6-phosphate from D-galactose 6-phosphate: step 1/1. This chain is Galactose-6-phosphate isomerase subunit LacA, found in Enterococcus faecalis (strain ATCC 700802 / V583).